The chain runs to 431 residues: Magnetosome protein MamH (431 aa).

Transmembrane regions (helical) follow at residues 21-41 (LLSALCMVFMTLVVAIQPLFL), 57-77 (ANVQVVTEVLDLFIFAYLGYL), 86-106 (IIVAGFLVAAIGAVIAPLSPW), 107-127 (IGGASIGALVVYYVSRVIMSA), 156-176 (TAFMMAFGVTLVYAVLMQIPA), 178-198 (AGIAVTMLLTAAVSLAGAWLA), 243-263 (MVFVGLFLMLWFIYFADLIKV), 274-294 (ILIGLMGAVVMLSIPVWRSFI), 302-321 (AVLLGMVLSALGFIMLGFII), 358-378 (LLGSVLGAFNVIGCIGIIFFV), and 380-400 (VGGFLFDYVGPPAPFVFTGVG).

The protein belongs to the major facilitator superfamily.

The protein resides in the magnetosome membrane. Its function is as follows. Required for correct biomineralization of the magnetosome; probably transports some form of iron. Partially functionally redundant with MamZ. The sequence is that of Magnetosome protein MamH (mamH) from Paramagnetospirillum magneticum (strain ATCC 700264 / AMB-1) (Magnetospirillum magneticum).